The primary structure comprises 150 residues: Large ribosomal subunit protein uL11 (150 aa).

The protein belongs to the universal ribosomal protein uL11 family. Part of the ribosomal stalk of the 50S ribosomal subunit. Interacts with L10 and the large rRNA to form the base of the stalk. L10 forms an elongated spine to which L12 dimers bind in a sequential fashion forming a multimeric L10(L12)X complex. One or more lysine residues are methylated.

Functionally, forms part of the ribosomal stalk which helps the ribosome interact with GTP-bound translation factors. The chain is Large ribosomal subunit protein uL11 from Cereibacter sphaeroides (strain ATCC 17025 / ATH 2.4.3) (Rhodobacter sphaeroides).